A 39-amino-acid chain; its full sequence is Omega-theraphotoxin-Asp1g (39 aa).

3 disulfide bridges follow: cysteine 4/cysteine 25, cysteine 8/cysteine 31, and cysteine 17/cysteine 36.

This sequence belongs to the neurotoxin 12 (Hwtx-2) family. 06 (TXP1) subfamily. Expressed by the venom gland.

It is found in the secreted. Functionally, inhibits voltage-gated calcium channels (Cav) in rat cerebellar granule cells. Has insecticidal activity. This Aphonopelma sp. (American tarantula) protein is Omega-theraphotoxin-Asp1g.